The sequence spans 752 residues: DNA ligase (752 aa).

NAD(+)-binding positions include 48-52, 97-98, and E131; these read DADYD and SL. K133 acts as the N6-AMP-lysine intermediate in catalysis. Residues R154, E189, K305, and K329 each contribute to the NAD(+) site. The Zn(2+) site is built by C434, C437, C452, and C458. Residues 599 to 615 are compositionally biased toward basic and acidic residues; sequence ADEGRRASLQPQRDKAW. The tract at residues 599–618 is disordered; sequence ADEGRRASLQPQRDKAWADT. One can recognise a BRCT domain in the interval 673-752; that stretch reads ATQSAVAGLT…EQWLDRIGDA (80 aa).

Belongs to the NAD-dependent DNA ligase family. LigA subfamily. Requires Mg(2+) as cofactor. The cofactor is Mn(2+).

It catalyses the reaction NAD(+) + (deoxyribonucleotide)n-3'-hydroxyl + 5'-phospho-(deoxyribonucleotide)m = (deoxyribonucleotide)n+m + AMP + beta-nicotinamide D-nucleotide.. Functionally, DNA ligase that catalyzes the formation of phosphodiester linkages between 5'-phosphoryl and 3'-hydroxyl groups in double-stranded DNA using NAD as a coenzyme and as the energy source for the reaction. It is essential for DNA replication and repair of damaged DNA. The polypeptide is DNA ligase (Jannaschia sp. (strain CCS1)).